The primary structure comprises 545 residues: Delta 8-(E)-sphingolipid desaturase (545 aa).

Residues 1–82 form the Cytochrome b5 heme-binding domain; it reads MASHTKDALL…MLAFQIGRIQ (82 aa). Positions 42 and 65 each coordinate heme. The interval 97-124 is disordered; the sequence is FRHYDENADSEEDDTSGQSQPPSPIFDA. The chain crosses the membrane as a helical span at residues 227-247; the sequence is LGWYSVSAVFLGCFWHQLVFS. The Histidine box-1 motif lies at 249–253; the sequence is HDAGH. The helical transmembrane segment at 262-282 threads the bilayer; the sequence is VDSIIGILIADFLGGLSLGWW. The short motif at 286–290 is the Histidine box-2 element; that stretch reads HNVHH. 2 helical membrane passes run 382 to 402 and 408 to 428; these read IAGQ…CSIP and LSFL…ITLS. The Histidine box-3 motif lies at 470-474; that stretch reads QAIHH.

It belongs to the fatty acid desaturase type 1 family.

The protein localises to the membrane. The catalysed reaction is an N-acylsphing-4-enine + 2 Fe(II)-[cytochrome b5] + O2 + 2 H(+) = a (4E,8E)-4-sphinga-4,8-dienine ceramide + 2 Fe(III)-[cytochrome b5] + 2 H2O. It participates in lipid metabolism; sphingolipid metabolism. Delta(8)-fatty-acid desaturase which introduces a double bond at the 8-position in the long-chain base (LCB) of ceramides. Required for the formation of the di-unsaturated sphingoid base (E,E)-sphinga-4,8-dienine during glucosylceramide (GluCer) biosynthesis. Plays an important role in conidiation. The polypeptide is Delta 8-(E)-sphingolipid desaturase (Emericella nidulans (strain FGSC A4 / ATCC 38163 / CBS 112.46 / NRRL 194 / M139) (Aspergillus nidulans)).